A 220-amino-acid chain; its full sequence is Coat protein (220 aa).

The protein belongs to the potexvirus capsid protein family.

The protein resides in the virion. Required for genome encapsidation. Forms ribonucleoprotein complexes along with TGB1 helicase and viral RNA. In Cattleya (Nun's hood orchid), this protein is Coat protein.